The following is a 388-amino-acid chain: Succinate--CoA ligase [ADP-forming] subunit beta (388 aa).

The region spanning 9–245 (KELLAGYGLP…KSQENERELK (237 aa)) is the ATP-grasp domain. ATP is bound by residues lysine 46, 53–55 (GRG), glutamate 100, tyrosine 103, and glutamate 108. Mg(2+) is bound by residues asparagine 200 and aspartate 214. Residues asparagine 265 and 322 to 324 (GIV) contribute to the substrate site.

This sequence belongs to the succinate/malate CoA ligase beta subunit family. Heterotetramer of two alpha and two beta subunits. Mg(2+) serves as cofactor.

The enzyme catalyses succinate + ATP + CoA = succinyl-CoA + ADP + phosphate. It catalyses the reaction GTP + succinate + CoA = succinyl-CoA + GDP + phosphate. The protein operates within carbohydrate metabolism; tricarboxylic acid cycle; succinate from succinyl-CoA (ligase route): step 1/1. Succinyl-CoA synthetase functions in the citric acid cycle (TCA), coupling the hydrolysis of succinyl-CoA to the synthesis of either ATP or GTP and thus represents the only step of substrate-level phosphorylation in the TCA. The beta subunit provides nucleotide specificity of the enzyme and binds the substrate succinate, while the binding sites for coenzyme A and phosphate are found in the alpha subunit. The chain is Succinate--CoA ligase [ADP-forming] subunit beta from Neisseria meningitidis serogroup C / serotype 2a (strain ATCC 700532 / DSM 15464 / FAM18).